The sequence spans 148 residues: MAHLLLLHGPNLNLLGTREPEVYGRTTLAQIDAALVDRAQAAGHVLHCLQSNAEHVLVERIHAAREDGTAYILINPAAFTHTSVALRDALLGVGLPFVEIHLSNPHAREPFRHHSYLSDKADGVICGFGADSYRLALEAVIARLERDA.

Tyr-23 functions as the Proton acceptor in the catalytic mechanism. 3 residues coordinate substrate: Asn-75, His-81, and Asp-88. His-101 serves as the catalytic Proton donor. Substrate is bound by residues 102–103 and Arg-112; that span reads LS.

Belongs to the type-II 3-dehydroquinase family. As to quaternary structure, homododecamer.

The enzyme catalyses 3-dehydroquinate = 3-dehydroshikimate + H2O. The protein operates within metabolic intermediate biosynthesis; chorismate biosynthesis; chorismate from D-erythrose 4-phosphate and phosphoenolpyruvate: step 3/7. In terms of biological role, catalyzes a trans-dehydration via an enolate intermediate. This Xanthomonas axonopodis pv. citri (strain 306) protein is 3-dehydroquinate dehydratase.